Reading from the N-terminus, the 1229-residue chain is Membrane-anchored lipid-binding protein SIP3 (1229 aa).

Over 1–1066 the chain is Cytoplasmic; that stretch reads MSVHGRDPKK…AEKFSRINRM (1066 aa). Positions 309-423 constitute a PH domain; the sequence is SPEKSGWLYM…WLIAFEATKK (115 aa). Residues 771–976 enclose the VASt domain; that stretch reads EYSITYNHEY…VLRYYLEKIG (206 aa). Residues 1067-1087 form a helical membrane-spanning segment; sequence MVVGLLASIMINILLSEKASV. Residues 1088–1229 are Lumenal-facing; sequence PYWSIKRAEK…ELEKLRPPIT (142 aa). An N-linked (GlcNAc...) asparagine glycan is attached at Asn-1206.

Belongs to the SIP3 family. As to quaternary structure, interacts with SNF1.

The protein localises to the endoplasmic reticulum membrane. In terms of biological role, may be involved in sterol transfer between intracellular membranes. This is Membrane-anchored lipid-binding protein SIP3 from Saccharomyces cerevisiae (strain ATCC 204508 / S288c) (Baker's yeast).